The chain runs to 363 residues: Spermidine/putrescine import ATP-binding protein PotA (363 aa).

The 231-residue stretch at 4 to 234 (LELRNVIRRF…PANRFIADFI (231 aa)) folds into the ABC transporter domain. 36-43 (GPSGCGKT) is an ATP binding site.

It belongs to the ABC transporter superfamily. Spermidine/putrescine importer (TC 3.A.1.11.1) family. As to quaternary structure, the complex is composed of two ATP-binding proteins (PotA), two transmembrane proteins (PotB and PotC) and a solute-binding protein (PotD).

The protein resides in the cell inner membrane. The catalysed reaction is ATP + H2O + polyamine-[polyamine-binding protein]Side 1 = ADP + phosphate + polyamineSide 2 + [polyamine-binding protein]Side 1.. Part of the ABC transporter complex PotABCD involved in spermidine/putrescine import. Responsible for energy coupling to the transport system. This Nitrosomonas eutropha (strain DSM 101675 / C91 / Nm57) protein is Spermidine/putrescine import ATP-binding protein PotA.